Consider the following 514-residue polypeptide: Peptide chain release factor 3 (514 aa).

One can recognise a tr-type G domain in the interval 8–268 (KKRRTFAIIS…TFLEFAPEPH (261 aa)). GTP contacts are provided by residues 17-24 (SHPDAGKT), 85-89 (DTPGH), and 139-142 (NKLD).

The protein belongs to the TRAFAC class translation factor GTPase superfamily. Classic translation factor GTPase family. PrfC subfamily.

The protein resides in the cytoplasm. Functionally, increases the formation of ribosomal termination complexes and stimulates activities of RF-1 and RF-2. It binds guanine nucleotides and has strong preference for UGA stop codons. It may interact directly with the ribosome. The stimulation of RF-1 and RF-2 is significantly reduced by GTP and GDP, but not by GMP. The chain is Peptide chain release factor 3 from Streptococcus pyogenes serotype M1.